The chain runs to 442 residues: Trigger factor (442 aa).

Residues Asp-165–Pro-250 form the PPIase FKBP-type domain.

The protein belongs to the FKBP-type PPIase family. Tig subfamily.

Its subcellular location is the cytoplasm. It carries out the reaction [protein]-peptidylproline (omega=180) = [protein]-peptidylproline (omega=0). Its function is as follows. Involved in protein export. Acts as a chaperone by maintaining the newly synthesized protein in an open conformation. Functions as a peptidyl-prolyl cis-trans isomerase. The chain is Trigger factor from Coxiella burnetii (strain CbuG_Q212) (Coxiella burnetii (strain Q212)).